The sequence spans 394 residues: Nuclear pore glycoprotein p62 (394 aa).

5 tandem repeats follow at residues 22–23 (FG), 50–51 (FG), 75–76 (FG), 77–78 (FG), and 116–117 (FG). The 5 X 2 AA repeats of F-G stretch occupies residues 22 to 117 (FGLSTGTPAA…GTSAAPPAFG (96 aa)). Low complexity predominate over residues 45–57 (KTTFSFGTPAPTA). Positions 45–73 (KTTFSFGTPAPTAGIGGGDADNSKAQAPP) are disordered. Residues 211–341 (SYHQLEEHIN…DNLNEANKGQ (131 aa)) adopt a coiled-coil conformation.

It belongs to the nucleoporin NSP1/NUP62 family. Expressed in adult male accessory glands (at protein level).

It is found in the nucleus. The protein resides in the chromosome. The protein localises to the nucleus envelope. Its subcellular location is the nuclear pore complex. It localises to the cytoplasm. It is found in the cytoskeleton. The protein resides in the spindle pole. The protein localises to the microtubule organizing center. Its subcellular location is the centrosome. Its function is as follows. Essential component of the nuclear pore complex. The N-terminal is probably involved in nucleocytoplasmic transport. The C-terminal is involved in protein-protein interaction probably via coiled-coil formation, promotes its association with centrosomes and may function in anchorage of Nup62 to the pore complex. Binds to transcriptionally active genes. Negatively regulates chromatin attachment to the nuclear envelope, probably by preventing chromatin tethering by Nup154. This Drosophila melanogaster (Fruit fly) protein is Nuclear pore glycoprotein p62.